The sequence spans 436 residues: Exodeoxyribonuclease 7 large subunit (436 aa).

Residues 412-436 (PGGVMNKNSNTTDSTDNTENGTGEA) are disordered. Low complexity predominate over residues 417-436 (NKNSNTTDSTDNTENGTGEA).

This sequence belongs to the XseA family. As to quaternary structure, heterooligomer composed of large and small subunits.

It localises to the cytoplasm. The catalysed reaction is Exonucleolytic cleavage in either 5'- to 3'- or 3'- to 5'-direction to yield nucleoside 5'-phosphates.. In terms of biological role, bidirectionally degrades single-stranded DNA into large acid-insoluble oligonucleotides, which are then degraded further into small acid-soluble oligonucleotides. The chain is Exodeoxyribonuclease 7 large subunit from Corynebacterium jeikeium (strain K411).